The primary structure comprises 466 residues: Citrate synthase, mitochondrial (466 aa).

A mitochondrion-targeting transit peptide spans 1–27 (MALLTAAARLFGAKNASCLVLAARHAS). An SIFI-degron motif is present at residues 2–21 (ALLTAAARLFGAKNASCLVL). At lysine 57 the chain carries N6-succinyllysine. Lysine 76 is subject to N6-acetyllysine; alternate. N6-succinyllysine; alternate is present on lysine 76. 2 positions are modified to N6-succinyllysine: lysine 103 and lysine 193. Serine 226 is modified (phosphoserine). Residue histidine 301 is part of the active site. Lysine 321 and lysine 327 each carry N6-acetyllysine; alternate. Lysine 321 and lysine 327 each carry N6-succinyllysine; alternate. Histidine 347 is an active-site residue. Residue arginine 356 participates in oxaloacetate binding. Residue lysine 375 is modified to N6-acetyllysine; alternate. Lysine 375 carries the post-translational modification N6-succinyllysine; alternate. Lysine 382 bears the N6-acetyllysine mark. Residue lysine 393 is modified to N6-acetyllysine; alternate. An N6-succinyllysine; alternate modification is found at lysine 393. Lysine 395 bears the N6,N6,N6-trimethyllysine mark. Aspartate 402 is an active-site residue. Oxaloacetate-binding residues include arginine 428 and arginine 448. Residue lysine 450 is modified to N6-succinyllysine. Lysine 459 bears the N6-acetyllysine; alternate mark. Lysine 459 carries the N6-succinyllysine; alternate modification.

It belongs to the citrate synthase family. In terms of assembly, homodimer. Post-translationally, methylated. Trimethylation at Lys-395 by CSKMT decreases citrate synthase activity. In response to mitochondrial stress, the precursor protein is ubiquitinated by the SIFI complex in the cytoplasm before mitochondrial import, leading to its degradation. Within the SIFI complex, UBR4 initiates ubiquitin chain that are further elongated or branched by KCMF1.

The protein resides in the mitochondrion matrix. The catalysed reaction is oxaloacetate + acetyl-CoA + H2O = citrate + CoA + H(+). Its pathway is carbohydrate metabolism; tricarboxylic acid cycle; isocitrate from oxaloacetate: step 1/2. Key enzyme of the Krebs tricarboxylic acid cycle which catalyzes the synthesis of citrate from acetyl coenzyme A and oxaloacetate. The protein is Citrate synthase, mitochondrial (CS) of Bos taurus (Bovine).